Reading from the N-terminus, the 184-residue chain is MNATEMVVLLDDAGTPIGEAPKAGVHTLDTPLHLAFSCYLINDVGEVLLTRRSPEKKTWPGVWTNSFCGHPGPGEEFEDAILRRAQFELGVDANKIELVLPHFRYRAIDPTGIVENEVCPVYVARITGVLNPNPAEVADWAWISPALLADALEHTPSAFSPWLGLQFPQLLEANALPLQAGAEA.

Mn(2+) is bound by residues His-26 and His-33. The 135-residue stretch at 31-165 (PLHLAFSCYL…PSAFSPWLGL (135 aa)) folds into the Nudix hydrolase domain. Residue Cys-68 is part of the active site. His-70 lines the Mn(2+) pocket. Glu-88 is a binding site for Mg(2+). Mn(2+)-binding residues include Glu-115 and Glu-117. The active site involves Glu-117.

Belongs to the IPP isomerase type 1 family. Mg(2+) is required as a cofactor. The cofactor is Mn(2+).

The protein localises to the cytoplasm. The enzyme catalyses isopentenyl diphosphate = dimethylallyl diphosphate. It participates in isoprenoid biosynthesis; dimethylallyl diphosphate biosynthesis; dimethylallyl diphosphate from isopentenyl diphosphate: step 1/1. Catalyzes the 1,3-allylic rearrangement of the homoallylic substrate isopentenyl (IPP) to its highly electrophilic allylic isomer, dimethylallyl diphosphate (DMAPP). The chain is Isopentenyl-diphosphate Delta-isomerase from Paenarthrobacter aurescens (strain TC1).